Consider the following 189-residue polypeptide: Peptidyl-tRNA hydrolase (189 aa).

Y14 contributes to the tRNA binding site. H19 (proton acceptor) is an active-site residue. Positions 64, 66, and 112 each coordinate tRNA.

Belongs to the PTH family. In terms of assembly, monomer.

Its subcellular location is the cytoplasm. The enzyme catalyses an N-acyl-L-alpha-aminoacyl-tRNA + H2O = an N-acyl-L-amino acid + a tRNA + H(+). Functionally, hydrolyzes ribosome-free peptidyl-tRNAs (with 1 or more amino acids incorporated), which drop off the ribosome during protein synthesis, or as a result of ribosome stalling. Its function is as follows. Catalyzes the release of premature peptidyl moieties from peptidyl-tRNA molecules trapped in stalled 50S ribosomal subunits, and thus maintains levels of free tRNAs and 50S ribosomes. The chain is Peptidyl-tRNA hydrolase from Clostridium botulinum (strain 657 / Type Ba4).